The following is a 55-amino-acid chain: Photosystem I reaction center subunit IX (55 aa).

A helical membrane pass occupies residues 7-27 (YLSVAPVLSTLWFGSLAGLLI).

This sequence belongs to the PsaJ family.

It localises to the plastid. It is found in the chloroplast thylakoid membrane. Its function is as follows. May help in the organization of the PsaE and PsaF subunits. This is Photosystem I reaction center subunit IX from Gossypium barbadense (Sea Island cotton).